The primary structure comprises 372 residues: Glutamate 5-kinase (372 aa).

Position 14 (Lys14) interacts with ATP. The substrate site is built by Ser54, Asp141, and Asn153. ATP-binding positions include 173–174 and 215–221; these read TD and SGGMLTK. Residues 280 to 358 form the PUA domain; the sequence is AGKVVVDEGA…HEIEHILGYI (79 aa).

Belongs to the glutamate 5-kinase family.

The protein resides in the cytoplasm. The catalysed reaction is L-glutamate + ATP = L-glutamyl 5-phosphate + ADP. It participates in amino-acid biosynthesis; L-proline biosynthesis; L-glutamate 5-semialdehyde from L-glutamate: step 1/2. In terms of biological role, catalyzes the transfer of a phosphate group to glutamate to form L-glutamate 5-phosphate. The chain is Glutamate 5-kinase from Methylobacillus flagellatus (strain ATCC 51484 / DSM 6875 / VKM B-1610 / KT).